The following is a 206-amino-acid chain: Large ribosomal subunit protein bL25 (206 aa).

The tract at residues 184 to 206 is disordered; sequence AEEAAAEVAEPEVIKKGKEEEEE. A compositionally biased stretch (basic and acidic residues) spans 195–206; the sequence is EVIKKGKEEEEE.

Belongs to the bacterial ribosomal protein bL25 family. CTC subfamily. Part of the 50S ribosomal subunit; part of the 5S rRNA/L5/L18/L25 subcomplex. Contacts the 5S rRNA. Binds to the 5S rRNA independently of L5 and L18.

Its function is as follows. This is one of the proteins that binds to the 5S RNA in the ribosome where it forms part of the central protuberance. The sequence is that of Large ribosomal subunit protein bL25 from Thermus thermophilus (strain ATCC BAA-163 / DSM 7039 / HB27).